The sequence spans 262 residues: Small ribosomal subunit protein uS2 (262 aa).

Positions 240–262 (NLDEKEESQEAESTEENTTVESN) are disordered. Residues 243-254 (EKEESQEAESTE) show a composition bias toward acidic residues.

This sequence belongs to the universal ribosomal protein uS2 family.

The sequence is that of Small ribosomal subunit protein uS2 from Staphylococcus haemolyticus (strain JCSC1435).